The following is a 503-amino-acid chain: Structure-specific endonuclease subunit EME2 (503 aa).

Composition is skewed to basic and acidic residues over residues 1 to 10 (METKQERETG), 38 to 48 (ETNKPQTESRK), and 112 to 135 (AEEK…LEKI). Residues 1 to 135 (METKQERETG…KAQKKELEKI (135 aa)) form a disordered region. A nuclease-like domain; forms the post-nick DNA binding interface and is involved in DNA recognition and bending region spans residues 70-366 (QPDVEEKTKN…RPFRKHWEAQ (297 aa)). Residues 103–151 (EQVAAEQEQAEEKKRQRELKRQEKAQKKELEKIERERRKETNLALKLLR) adopt a coiled-coil conformation. Residues 388–503 (GLPLTWRRQI…NPELVLDLNS (116 aa)) are helix-hairpin-helix (2HhH); forms the pre-nick DNA binding interface and is involved in DNA recognition and bending.

The protein belongs to the EME1/MMS4 family. Part of the heterodimeric MUS81-EME2 complex; the complex forms specifically during the DNA replication phase of the cell cycle.

The protein resides in the nucleus. In terms of biological role, non-catalytic subunit of the structure-specific, heterodimeric DNA endonuclease MUS81-EME2 which is involved in the maintenance of genome stability. In the complex, EME2 is required for DNA cleavage, participating in DNA recognition and bending. MUS81-EME2 cleaves 3'-flaps and nicked Holliday junctions, and exhibit limited endonuclease activity with 5' flaps and nicked double-stranded DNAs. MUS81-EME2 which is active during the replication of DNA is more specifically involved in replication fork processing. Replication forks frequently encounter obstacles to their passage, including DNA base lesions, DNA interstrand cross-links, difficult-to-replicate sequences, transcription bubbles, or tightly bound proteins. One mechanism for the restart of a stalled replication fork involves nucleolytic cleavage mediated by the MUS81-EME2 endonuclease. By acting upon the stalled fork, MUS81-EME2 generates a DNA double-strand break (DSB) that can be repaired by homologous recombination, leading to the restoration of an active fork. MUS81-EME2 could also function in telomere maintenance. The sequence is that of Structure-specific endonuclease subunit EME2 (eme2) from Xenopus tropicalis (Western clawed frog).